Consider the following 217-residue polypeptide: Superoxide dismutase [Mn], mitochondrial (217 aa).

The N-terminal 17 residues, 1-17 (MFVARKISPNCKPGVRG), are a transit peptide targeting the mitochondrion. Mn(2+) contacts are provided by His-43, His-91, Asp-175, and His-179.

This sequence belongs to the iron/manganese superoxide dismutase family. As to quaternary structure, homotetramer. Mn(2+) is required as a cofactor.

Its subcellular location is the mitochondrion matrix. The catalysed reaction is 2 superoxide + 2 H(+) = H2O2 + O2. Functionally, destroys superoxide anion radicals which are normally produced within the cells and which are toxic to biological systems. In Drosophila melanogaster (Fruit fly), this protein is Superoxide dismutase [Mn], mitochondrial (Sod2).